The primary structure comprises 455 residues: N(6)-adenosine-methyltransferase non-catalytic subunit METTL14 (455 aa).

Residues 21-96 are disordered; the sequence is QQLGAESPDS…QHQEESGPYE (76 aa). Residues 37-51 show a composition bias toward basic and acidic residues; the sequence is SKDEQKEIEETRETC. Residues 69-82 are compositionally biased toward acidic residues; it reads EGEDPEEDVEEQKE. Interaction with METTL3 regions lie at residues 134–135 and 236–237; these read RD and SG. Positions 244-253 are positively charged region required for RNA-binding; that stretch reads RMCLRKWGFR. Interaction with METTL3 regions lie at residues 254–257 and 277–286; these read RCED and KAVFQRTKEH. The interval 296–297 is positively charged region required for RNA-binding; sequence RR. An interaction with METTL3 region spans residues 307–311; it reads NVDID. The interval 392–455 is disordered; that stretch reads ERLRPKSPPP…GGPHRGFPPR (64 aa). The span at 407-421 shows a compositional bias: gly residues; sequence RGGGAPRGGRGGPAA. The segment covering 423–441 has biased composition (basic and acidic residues); it reads RGDRGRERNRPNFRGDRGG.

Belongs to the MT-A70-like family. Heterodimer; heterodimerizes with mettl3 to form an antiparallel heterodimer that constitutes an active methyltransferase. Component of the WMM complex, a N6-methyltransferase complex composed of a catalytic subcomplex, named MAC, and of an associated subcomplex, named MACOM. The MAC subcomplex is composed of mettl3 and mettl14.

The protein resides in the nucleus. In terms of biological role, the METTL3-METTL14 heterodimer forms a N6-methyltransferase complex that methylates adenosine residues at the N(6) position of some mRNAs and regulates the circadian clock, differentiation of embryonic stem cells and cortical neurogenesis. In the heterodimer formed with mettl3, mettl14 constitutes the RNA-binding scaffold that recognizes the substrate rather than the catalytic core. N6-methyladenosine (m6A), which takes place at the 5'-[AG]GAC-3' consensus sites of some mRNAs, plays a role in mRNA stability and processing. This is N(6)-adenosine-methyltransferase non-catalytic subunit METTL14 (mettl14) from Danio rerio (Zebrafish).